The following is a 446-amino-acid chain: Peroxisomal biogenesis factor 3 (446 aa).

At methionine 1–lysine 12 the chain is on the peroxisomal side. The helical transmembrane segment at leucine 13–alanine 33 threads the bilayer. Residues alanine 34–valine 446 lie on the Cytoplasmic side of the membrane. Residues arginine 101 to serine 122 form a disordered region.

The protein belongs to the peroxin-3 family.

It is found in the peroxisome membrane. Functionally, involved in peroxisome biosynthesis. The polypeptide is Peroxisomal biogenesis factor 3 (PEX3) (Eremothecium gossypii (strain ATCC 10895 / CBS 109.51 / FGSC 9923 / NRRL Y-1056) (Yeast)).